A 223-amino-acid polypeptide reads, in one-letter code: Urease accessory protein UreF (223 aa).

The protein belongs to the UreF family. UreD, UreF and UreG form a complex that acts as a GTP-hydrolysis-dependent molecular chaperone, activating the urease apoprotein by helping to assemble the nickel containing metallocenter of UreC. The UreE protein probably delivers the nickel.

The protein localises to the cytoplasm. Functionally, required for maturation of urease via the functional incorporation of the urease nickel metallocenter. The polypeptide is Urease accessory protein UreF (Mesorhizobium japonicum (strain LMG 29417 / CECT 9101 / MAFF 303099) (Mesorhizobium loti (strain MAFF 303099))).